The primary structure comprises 604 residues: MPSIKLLVWCCLCVISPRLCHSEKLFHSRDRSDLQPSAIEQAELVKDMLSAQQFLAKYGWTQPVIWDPSSTNENEPLKDFSLMQEGVCNPRQEVAEPTKSPQFIDALKKFQKLNNLPVTGTLDDATINAMNKPRCGVPDNQMAKKETEKPTAAQSLENKTKDSENVTQQNPDPPKIRRKRFLDMLMYSNKYREEQEALQKSTGKVFTKKLLKWRMIGEGYSNQLSINEQRYVFRLAFRMWSEVMPLDFEEDNTSPLSQIDIKLGFGRGRHLGCSRAFDGSGQEFAHAWFLGDIHFDDDEHFTAPSSEHGISLLKVAAHEIGHVLGLSHIHRVGSIMQPNYIPQDSGFELDLSDRRAIQNLYGSCEGPFDTAFDWIYKEKNQYGELVVRYNTYFFRNSWYWMYENRSNRTRYGDPLAIANGWHGIPVQNIDAFVHVWTWTRDASYFFKGTQYWRYDSENDKAYAEDAQGKSYPRLISEGFPGIPSPINAAYFDRRRQYIYFFRDSQVFAFDINRNRVAPDFPKRILDFFPAVAANNHPKGNIDVAYYSYTYSSLFLFKGKEFWKVVSDKDRRQNPSLPYNGLFPRRAISQQWFDICNVHPSLLKI.

The first 22 residues, 1-22 (MPSIKLLVWCCLCVISPRLCHS), serve as a signal peptide directing secretion. Positions 23–180 (EKLFHSRDRS…PDPPKIRRKR (158 aa)) are excised as a propeptide. Residues 132–175 (KPRCGVPDNQMAKKETEKPTAAQSLENKTKDSENVTQQNPDPPK) form a disordered region. The short motif at 133–140 (PRCGVPDN) is the Cysteine switch element. Residue cysteine 135 participates in Zn(2+) binding. 2 N-linked (GlcNAc...) asparagine glycosylation sites follow: asparagine 158 and asparagine 165. Histidine 318 lines the Zn(2+) pocket. The active site involves glutamate 319. Zn(2+) is bound by residues histidine 322 and histidine 328. Cysteines 364 and 595 form a disulfide. Hemopexin repeat units follow at residues 365–424 (EGPF…WHGI), 426–482 (VQNI…FPGI), 483–531 (PSPI…FPAV), and 538–594 (KGNI…WFDI). 2 N-linked (GlcNAc...) asparagine glycosylation sites follow: asparagine 404 and asparagine 407.

Belongs to the peptidase M10A family. Requires Zn(2+) as cofactor. Ca(2+) is required as a cofactor. In terms of processing, the precursor is cleaved by a furin endopeptidase.

It is found in the secreted. In terms of biological role, plays a specialized role in the generation of left-right asymmetry during embryogenesis. May act as a negative regulator of the NOTCH-signaling pathway. The sequence is that of Matrix metalloproteinase-21 (mmp21) from Xenopus laevis (African clawed frog).